Consider the following 38-residue polypeptide: Large ribosomal subunit protein bL36 (38 aa).

The protein belongs to the bacterial ribosomal protein bL36 family.

The protein is Large ribosomal subunit protein bL36 of Flavobacterium johnsoniae (strain ATCC 17061 / DSM 2064 / JCM 8514 / BCRC 14874 / CCUG 350202 / NBRC 14942 / NCIMB 11054 / UW101) (Cytophaga johnsonae).